The following is a 718-amino-acid chain: MSTEGSAVETLTIEEAAAELERLAREIAHHDALYHGKDQPEISDADYDALKRRNDALEARFPELIREDSPSRRVGAAPSVTFSPVVHARPMLSLDNTFSQEDVQDFVASVYRFLGRMPDQSIAFTAEPKIDGLSMSIRYENGRLTTAATRGDGTTGENVTANIRTIAEIPNQLPKGVPAVVEIRGEVYMAKSDFLALNRQMEAEGKQTYVNPRNTAAGSLRQLDAKVTASRKLKFFAYAWGEMSDMPADTQFAMVQTFKDWGFPVNPLMKRLNSVADILAHYDEIGLKRPDLDYDIDGVVYKVDSLELQQRLGFRSRSPRWATAHKFPAEQAFTEVEKIEIQVGRTGALTPVARLKPITVGGVVVTNATLHNEDYIKGIGNSGERIRPEEHDIREGDTVIVQRAGDVIPQILDVVMEKRLAEVKPYEFPKICPVCGSHAVREVNEKTGKMDSVRRCTGGFICRAQATEHLKHFVSRNAFDIEGLGSKQIDFFFENEDPSLQIRTAPEIFTLEKRQQDSLTKLENIDGFGKVSVGKLYAAINERRSIALHRFIYALGIRHVGETTAKLLARSYGTYEAFATAMKEAAPLSGDAWNDLNAIEGIGEVVARAMVEFYKEPRNVEVIGRLLDEVTPAEAEQPVTAGSPVAGKTVVFTGSLEKFTRDEAKARAESLGAKVAGSVSKKTDIVVAGPGAGSKLDKARELGVQTMDEDEWLALISG.

Residues 44–48 (DADYD), 93–94 (SL), and Glu127 contribute to the NAD(+) site. Residue Lys129 is the N6-AMP-lysine intermediate of the active site. NAD(+) contacts are provided by Arg150, Glu186, Lys302, and Lys326. 4 residues coordinate Zn(2+): Cys432, Cys435, Cys456, and Cys462. The region spanning 640–718 (TAGSPVAGKT…EDEWLALISG (79 aa)) is the BRCT domain.

This sequence belongs to the NAD-dependent DNA ligase family. LigA subfamily. It depends on Mg(2+) as a cofactor. Requires Mn(2+) as cofactor.

It catalyses the reaction NAD(+) + (deoxyribonucleotide)n-3'-hydroxyl + 5'-phospho-(deoxyribonucleotide)m = (deoxyribonucleotide)n+m + AMP + beta-nicotinamide D-nucleotide.. DNA ligase that catalyzes the formation of phosphodiester linkages between 5'-phosphoryl and 3'-hydroxyl groups in double-stranded DNA using NAD as a coenzyme and as the energy source for the reaction. It is essential for DNA replication and repair of damaged DNA. In Rhizobium etli (strain ATCC 51251 / DSM 11541 / JCM 21823 / NBRC 15573 / CFN 42), this protein is DNA ligase.